An 87-amino-acid chain; its full sequence is Small ribosomal subunit protein bS20 (87 aa).

This sequence belongs to the bacterial ribosomal protein bS20 family.

In terms of biological role, binds directly to 16S ribosomal RNA. The chain is Small ribosomal subunit protein bS20 from Neorickettsia sennetsu (strain ATCC VR-367 / Miyayama) (Ehrlichia sennetsu).